Here is a 252-residue protein sequence, read N- to C-terminus: Imidazole glycerol phosphate synthase subunit HisF (252 aa).

Residues D11 and D130 contribute to the active site.

The protein belongs to the HisA/HisF family. In terms of assembly, heterodimer of HisH and HisF.

It localises to the cytoplasm. It carries out the reaction 5-[(5-phospho-1-deoxy-D-ribulos-1-ylimino)methylamino]-1-(5-phospho-beta-D-ribosyl)imidazole-4-carboxamide + L-glutamine = D-erythro-1-(imidazol-4-yl)glycerol 3-phosphate + 5-amino-1-(5-phospho-beta-D-ribosyl)imidazole-4-carboxamide + L-glutamate + H(+). The protein operates within amino-acid biosynthesis; L-histidine biosynthesis; L-histidine from 5-phospho-alpha-D-ribose 1-diphosphate: step 5/9. IGPS catalyzes the conversion of PRFAR and glutamine to IGP, AICAR and glutamate. The HisF subunit catalyzes the cyclization activity that produces IGP and AICAR from PRFAR using the ammonia provided by the HisH subunit. This Azobacteroides pseudotrichonymphae genomovar. CFP2 protein is Imidazole glycerol phosphate synthase subunit HisF.